The following is a 594-amino-acid chain: Aspartate--tRNA(Asp/Asn) ligase (594 aa).

Glu176 contacts L-aspartate. The tract at residues 200 to 203 (QIFK) is aspartate. Position 222 (Arg222) interacts with L-aspartate. Residues 222–224 (RDE) and Gln231 contribute to the ATP site. His450 lines the L-aspartate pocket. Glu484 lines the ATP pocket. Arg491 is a binding site for L-aspartate. 536-539 (GLDR) contributes to the ATP binding site.

Belongs to the class-II aminoacyl-tRNA synthetase family. Type 1 subfamily. In terms of assembly, homodimer.

The protein resides in the cytoplasm. It catalyses the reaction tRNA(Asx) + L-aspartate + ATP = L-aspartyl-tRNA(Asx) + AMP + diphosphate. Its function is as follows. Aspartyl-tRNA synthetase with relaxed tRNA specificity since it is able to aspartylate not only its cognate tRNA(Asp) but also tRNA(Asn). Reaction proceeds in two steps: L-aspartate is first activated by ATP to form Asp-AMP and then transferred to the acceptor end of tRNA(Asp/Asn). This is Aspartate--tRNA(Asp/Asn) ligase from Geobacillus sp. (strain WCH70).